A 499-amino-acid chain; its full sequence is Cytochrome P450 monooxygenase ausI (499 aa).

A helical transmembrane segment spans residues Pro-10–Tyr-30. Position 439 (Cys-439) interacts with heme. An N-linked (GlcNAc...) asparagine glycan is attached at Asn-483.

The protein belongs to the cytochrome P450 family. Heme serves as cofactor.

It is found in the membrane. Its pathway is secondary metabolite biosynthesis; terpenoid biosynthesis. Cytochrome P450 monooxygenase; part of the gene cluster B that mediates the biosynthesis of austinol and dehydroaustinol, two fungal meroterpenoids. The first step of the pathway is the synthesis of 3,5-dimethylorsellinic acid by the polyketide synthase ausA. 3,5-dimethylorsellinic acid is then prenylated by the polyprenyl transferase ausN. Further epoxidation by the FAD-dependent monooxygenase ausM and cyclization by the probable terpene cyclase ausL lead to the formation of protoaustinoid A. Protoaustinoid A is then oxidized to spiro-lactone preaustinoid A3 by the combined action of the FAD-binding monooxygenases ausB and ausC, and the dioxygenase ausE. Acid-catalyzed keto-rearrangement and ring contraction of the tetraketide portion of preaustinoid A3 by ausJ lead to the formation of preaustinoid A4. The aldo-keto reductase ausK, with the help of ausH, is involved in the next step by transforming preaustinoid A4 into isoaustinone which is in turn hydroxylated by the P450 monooxygenase ausI to form austinolide. Finally, the cytochrome P450 monooxygenase ausG modifies austinolide to austinol. Austinol can be further modified to dehydroaustinol which forms a diffusible complex with diorcinol that initiates conidiation. Due to genetic rearrangements of the clusters and the subsequent loss of some enzymes, the end products of the Emericella nidulans austinoid biosynthesis clusters are austinol and dehydroaustinol, even if additional enzymes, such as the O-acetyltransferase ausQ and the cytochrome P450 monooxygenase ausR are still functional. This Emericella nidulans (strain FGSC A4 / ATCC 38163 / CBS 112.46 / NRRL 194 / M139) (Aspergillus nidulans) protein is Cytochrome P450 monooxygenase ausI.